Here is a 341-residue protein sequence, read N- to C-terminus: L-threonine 3-dehydrogenase (341 aa).

Residue C38 participates in Zn(2+) binding. Residues T40 and H43 each act as charge relay system in the active site. Positions 63, 64, 93, 96, 99, and 107 each coordinate Zn(2+). Residues I175, D195, R200, 262–264 (LGI), and 286–287 (IY) each bind NAD(+).

It belongs to the zinc-containing alcohol dehydrogenase family. In terms of assembly, homotetramer. It depends on Zn(2+) as a cofactor.

The protein resides in the cytoplasm. The catalysed reaction is L-threonine + NAD(+) = (2S)-2-amino-3-oxobutanoate + NADH + H(+). The protein operates within amino-acid degradation; L-threonine degradation via oxydo-reductase pathway; glycine from L-threonine: step 1/2. In terms of biological role, catalyzes the NAD(+)-dependent oxidation of L-threonine to 2-amino-3-ketobutyrate. The chain is L-threonine 3-dehydrogenase from Escherichia fergusonii (strain ATCC 35469 / DSM 13698 / CCUG 18766 / IAM 14443 / JCM 21226 / LMG 7866 / NBRC 102419 / NCTC 12128 / CDC 0568-73).